Consider the following 352-residue polypeptide: Fe-S cluster assembly protein DRE2 (352 aa).

Polar residues predominate over residues 1-11; it reads MAPTAVYTQKD. The disordered stretch occupies residues 1–24; that stretch reads MAPTAVYTQKDSPSSSQPSSKGPA. Positions 1 to 196 are N-terminal SAM-like domain; the sequence is MAPTAVYTQK…TVTSAPSVPL (196 aa). The tract at residues 196-237 is linker; the sequence is LLLRKRGDPAKKKALWALTTDASASPSTKIDADALLTAEDKA. The [2Fe-2S] cluster site is built by Cys243, Cys257, Cys260, and Cys262. The fe-S binding site A stretch occupies residues 243 to 262; sequence CAPVDRSAPRRKKACKNCSC. Cys315, Cys318, Cys326, and Cys329 together coordinate [4Fe-4S] cluster. 2 consecutive short sequence motifs (cx2C motif) follow at residues 315–318 and 326–329; these read CGSC and CAGC. The fe-S binding site B stretch occupies residues 315-329; sequence CGSCFLGDAFRCAGC.

Belongs to the anamorsin family. Monomer. Interacts with TAH18. Interacts with MIA40. [2Fe-2S] cluster serves as cofactor. It depends on [4Fe-4S] cluster as a cofactor.

Its subcellular location is the cytoplasm. It localises to the mitochondrion intermembrane space. Its function is as follows. Component of the cytosolic iron-sulfur (Fe-S) protein assembly (CIA) machinery required for the maturation of extramitochondrial Fe-S proteins. Part of an electron transfer chain functioning in an early step of cytosolic Fe-S biogenesis, facilitating the de novo assembly of a [4Fe-4S] cluster on the scaffold complex CFD1-NBP35. Electrons are transferred to DRE2 from NADPH via the FAD- and FMN-containing protein TAH18. TAH18-DRE2 are also required for the assembly of the diferric tyrosyl radical cofactor of ribonucleotide reductase (RNR), probably by providing electrons for reduction during radical cofactor maturation in the catalytic small subunit RNR2. In Coprinopsis cinerea (strain Okayama-7 / 130 / ATCC MYA-4618 / FGSC 9003) (Inky cap fungus), this protein is Fe-S cluster assembly protein DRE2.